A 157-amino-acid polypeptide reads, in one-letter code: Protein Smg homolog (157 aa).

Belongs to the Smg family.

The protein is Protein Smg homolog of Xanthomonas euvesicatoria pv. vesicatoria (strain 85-10) (Xanthomonas campestris pv. vesicatoria).